The sequence spans 448 residues: Exodeoxyribonuclease 7 large subunit (448 aa).

This sequence belongs to the XseA family. In terms of assembly, heterooligomer composed of large and small subunits.

The protein localises to the cytoplasm. It catalyses the reaction Exonucleolytic cleavage in either 5'- to 3'- or 3'- to 5'-direction to yield nucleoside 5'-phosphates.. In terms of biological role, bidirectionally degrades single-stranded DNA into large acid-insoluble oligonucleotides, which are then degraded further into small acid-soluble oligonucleotides. This is Exodeoxyribonuclease 7 large subunit from Histophilus somni (strain 129Pt) (Haemophilus somnus).